Reading from the N-terminus, the 1093-residue chain is Receptor-mediated endocytosis protein 6 (1093 aa).

The 234-residue stretch at 156–389 folds into the Ras-GAP domain; sequence LKIAQVVCNL…EMMDALLVEK (234 aa). Disordered stretches follow at residues 547 to 610 and 643 to 669; these read DLEK…GGEQ and RSGSFVKPPPSGIPTSSSEQNLPDVAT. Polar residues-rich tracts occupy residues 568–577 and 584–598; these read IDFSSGSAET and DSTSVSPEPLTSTEE. The region spanning 955 to 1093 is the VPS9 domain; the sequence is HHRDKLLRGT…SAVEYIKTIL (139 aa).

Belongs to the GAPVD1 family. Interacts with GDP-bound rab-5. Interacts with alpha-adaptin.

The protein localises to the membrane. It localises to the cytoplasmic vesicle. It is found in the clathrin-coated vesicle. Acts both as a GTPase-activating protein (GAP) and a guanine nucleotide exchange factor (GEF), and participates in endocytosis. Acts by regulating the activation of rab-5 by exchanging bound GDP for free GTP at clathrin coated pits. This is Receptor-mediated endocytosis protein 6 (rme-6) from Caenorhabditis elegans.